The following is a 334-amino-acid chain: GTP 3',8-cyclase (334 aa).

Residues Arg13–Ala239 form the Radical SAM core domain. Arg22 is a binding site for GTP. Residues Cys29 and Cys33 each contribute to the [4Fe-4S] cluster site. S-adenosyl-L-methionine is bound at residue Tyr35. Residue Cys36 participates in [4Fe-4S] cluster binding. Arg73 contributes to the GTP binding site. Gly77 contributes to the S-adenosyl-L-methionine binding site. A GTP-binding site is contributed by Thr104. Ser128 is a binding site for S-adenosyl-L-methionine. Lys165 is a GTP binding site. Residue Met199 participates in S-adenosyl-L-methionine binding. Residues Cys262 and Cys265 each contribute to the [4Fe-4S] cluster site. Arg267–Arg269 lines the GTP pocket. Residue Cys279 coordinates [4Fe-4S] cluster.

This sequence belongs to the radical SAM superfamily. MoaA family. As to quaternary structure, monomer and homodimer. The cofactor is [4Fe-4S] cluster.

The catalysed reaction is GTP + AH2 + S-adenosyl-L-methionine = (8S)-3',8-cyclo-7,8-dihydroguanosine 5'-triphosphate + 5'-deoxyadenosine + L-methionine + A + H(+). Its pathway is cofactor biosynthesis; molybdopterin biosynthesis. Catalyzes the cyclization of GTP to (8S)-3',8-cyclo-7,8-dihydroguanosine 5'-triphosphate. The protein is GTP 3',8-cyclase of Vibrio vulnificus (strain CMCP6).